The primary structure comprises 427 residues: Kallistatin (427 aa).

The N-terminal stretch at 1-20 (MHLIDYLLLLLVGLLALSHG) is a signal peptide. N-linked (GlcNAc...) asparagine glycosylation is found at asparagine 33, asparagine 108, asparagine 157, and asparagine 238.

This sequence belongs to the serpin family. As to quaternary structure, monomer and some homodimers.

It is found in the secreted. Its function is as follows. Inhibits human amidolytic and kininogenase activities of tissue kallikrein. This Pongo abelii (Sumatran orangutan) protein is Kallistatin (SERPINA4).